The primary structure comprises 544 residues: Chaperonin GroEL 2 (544 aa).

ATP is bound by residues 30–33 (TLGP), K51, 87–91 (DGTTT), G415, and D496.

It belongs to the chaperonin (HSP60) family. As to quaternary structure, forms a cylinder of 14 subunits composed of two heptameric rings stacked back-to-back. Interacts with the co-chaperonin GroES.

The protein resides in the cytoplasm. The enzyme catalyses ATP + H2O + a folded polypeptide = ADP + phosphate + an unfolded polypeptide.. Together with its co-chaperonin GroES, plays an essential role in assisting protein folding. The GroEL-GroES system forms a nano-cage that allows encapsulation of the non-native substrate proteins and provides a physical environment optimized to promote and accelerate protein folding. This is Chaperonin GroEL 2 from Rhizobium johnstonii (strain DSM 114642 / LMG 32736 / 3841) (Rhizobium leguminosarum bv. viciae).